A 262-amino-acid chain; its full sequence is 3-methyl-2-oxobutanoate hydroxymethyltransferase (262 aa).

Mg(2+) contacts are provided by D43 and D82. 3-methyl-2-oxobutanoate-binding positions include 43 to 44 (DS), D82, and K111. E113 lines the Mg(2+) pocket. The active-site Proton acceptor is E180.

The protein belongs to the PanB family. As to quaternary structure, homodecamer; pentamer of dimers. Mg(2+) serves as cofactor.

The protein resides in the cytoplasm. It carries out the reaction 3-methyl-2-oxobutanoate + (6R)-5,10-methylene-5,6,7,8-tetrahydrofolate + H2O = 2-dehydropantoate + (6S)-5,6,7,8-tetrahydrofolate. It functions in the pathway cofactor biosynthesis; (R)-pantothenate biosynthesis; (R)-pantoate from 3-methyl-2-oxobutanoate: step 1/2. In terms of biological role, catalyzes the reversible reaction in which hydroxymethyl group from 5,10-methylenetetrahydrofolate is transferred onto alpha-ketoisovalerate to form ketopantoate. This Wolinella succinogenes (strain ATCC 29543 / DSM 1740 / CCUG 13145 / JCM 31913 / LMG 7466 / NCTC 11488 / FDC 602W) (Vibrio succinogenes) protein is 3-methyl-2-oxobutanoate hydroxymethyltransferase.